The primary structure comprises 106 residues: L-rhamnose mutarotase (106 aa).

Y20 serves as a coordination point for substrate. H24 functions as the Proton donor in the catalytic mechanism. Residues Y43 and 78–79 each bind substrate; that span reads WW.

The protein belongs to the rhamnose mutarotase family. Homodimer.

It localises to the cytoplasm. The catalysed reaction is alpha-L-rhamnose = beta-L-rhamnose. It functions in the pathway carbohydrate metabolism; L-rhamnose metabolism. Involved in the anomeric conversion of L-rhamnose. This chain is L-rhamnose mutarotase, found in Verminephrobacter eiseniae (strain EF01-2).